We begin with the raw amino-acid sequence, 697 residues long: Histone deacetylase HOS3 (697 aa).

A histone deacetylase region spans residues 40-440 (AKAVVVLSPY…LIGLQNQDWV (401 aa)). His-196 is an active-site residue. A disordered region spans residues 525 to 573 (IRSHRSNASPEKELHENKPRSTEKQEQREIRSDTKVKQLSSNNRAAETQ). Over residues 534 to 560 (PEKELHENKPRSTEKQEQREIRSDTKV) the composition is skewed to basic and acidic residues. The span at 561 to 573 (KQLSSNNRAAETQ) shows a compositional bias: polar residues. Residues Ser-582, Ser-583, Ser-613, and Ser-629 each carry the phosphoserine modification. Residues 625 to 638 (GDEDSDHELKEKNW) show a composition bias toward basic and acidic residues. Positions 625–697 (GDEDSDHELK…KHTTRSGGRW (73 aa)) are disordered. A compositionally biased stretch (polar residues) spans 665–674 (QPQNANTPTY).

It belongs to the histone deacetylase family. HD type 1 subfamily. In terms of assembly, homodimer.

The protein resides in the nucleus. It carries out the reaction N(6)-acetyl-L-lysyl-[histone] + H2O = L-lysyl-[histone] + acetate. In terms of biological role, responsible for the deacetylation of lysine residues on the N-terminal part of the core histones (H2A, H2B, H3 and H4). Histone deacetylation gives a tag for epigenetic repression and plays an important role in transcriptional regulation, cell cycle progression and developmental events. Histone deacetylases act via the formation of large multiprotein complexes. The sequence is that of Histone deacetylase HOS3 (HOS3) from Saccharomyces cerevisiae (strain ATCC 204508 / S288c) (Baker's yeast).